A 314-amino-acid polypeptide reads, in one-letter code: Methionyl-tRNA formyltransferase (314 aa).

109–112 provides a ligand contact to (6S)-5,6,7,8-tetrahydrofolate; the sequence is SLLP.

Belongs to the Fmt family.

It catalyses the reaction L-methionyl-tRNA(fMet) + (6R)-10-formyltetrahydrofolate = N-formyl-L-methionyl-tRNA(fMet) + (6S)-5,6,7,8-tetrahydrofolate + H(+). In terms of biological role, attaches a formyl group to the free amino group of methionyl-tRNA(fMet). The formyl group appears to play a dual role in the initiator identity of N-formylmethionyl-tRNA by promoting its recognition by IF2 and preventing the misappropriation of this tRNA by the elongation apparatus. In Alkaliphilus metalliredigens (strain QYMF), this protein is Methionyl-tRNA formyltransferase.